We begin with the raw amino-acid sequence, 346 residues long: tRNA N6-adenosine threonylcarbamoyltransferase (346 aa).

The Fe cation site is built by histidine 111 and histidine 115. Substrate contacts are provided by residues 134-138 (LVSGG), aspartate 167, glycine 180, aspartate 184, and asparagine 280. Aspartate 308 contacts Fe cation.

The protein belongs to the KAE1 / TsaD family. The cofactor is Fe(2+).

It localises to the cytoplasm. The catalysed reaction is L-threonylcarbamoyladenylate + adenosine(37) in tRNA = N(6)-L-threonylcarbamoyladenosine(37) in tRNA + AMP + H(+). Functionally, required for the formation of a threonylcarbamoyl group on adenosine at position 37 (t(6)A37) in tRNAs that read codons beginning with adenine. Is involved in the transfer of the threonylcarbamoyl moiety of threonylcarbamoyl-AMP (TC-AMP) to the N6 group of A37, together with TsaE and TsaB. TsaD likely plays a direct catalytic role in this reaction. The sequence is that of tRNA N6-adenosine threonylcarbamoyltransferase from Crocosphaera subtropica (strain ATCC 51142 / BH68) (Cyanothece sp. (strain ATCC 51142)).